A 299-amino-acid chain; its full sequence is MATH domain and coiled-coil domain-containing protein At2g42460 (299 aa).

Positions 7–130 constitute an MATH domain; that stretch reads QKTFTWKIEN…NNTLFIEVYI (124 aa). The stretch at 225–262 forms a coiled coil; the sequence is FRVKWLKSKLDEISLARKKKVDADAARVQELEGKVKNQ.

This chain is MATH domain and coiled-coil domain-containing protein At2g42460, found in Arabidopsis thaliana (Mouse-ear cress).